The primary structure comprises 374 residues: Transcription factor IIIA (374 aa).

7 consecutive C2H2-type zinc fingers follow at residues 23–47 (FHCPYEECGKKYSRPSLLEQHLRTH), 53–77 (FVCDYTGCSKAFYRKSHLKIHKRCH), 83–107 (FSCHYDGCDAQFYTQQHLERHIEVH), 113–138 (YACTWEGCDECFSKHQQLRSHISACH), 144–169 (YPCTYQDCELRFATKQKLQNHVNRAH), 204–226 (PSCSICGRQFKTAAHLRHHVVLH), and 236–261 (YHCPMEGCKKSFTRSSALKKHISVIH). The C2H2-type 8; atypical zinc-finger motif lies at 267 to 291 (FHCDSCGTKFGYKHMLQRHLERGTC). A C2H2-type 9 zinc finger spans residues 349 to 374 (YSCSFPECNYRFKRLYDMHRHLNSHH).

The protein resides in the nucleus. In terms of biological role, is required for correct transcription of 5S RNA genes by RNA polymerase III. Also binds the transcribed 5S RNA's. Initiates transcription of the 5S ribosomal RNA gene. This Schizosaccharomyces pombe (strain 972 / ATCC 24843) (Fission yeast) protein is Transcription factor IIIA (sfc2).